A 310-amino-acid polypeptide reads, in one-letter code: N-acetyl-gamma-glutamyl-phosphate reductase (310 aa).

Cys117 is a catalytic residue.

The protein belongs to the NAGSA dehydrogenase family. Type 2 subfamily.

The protein localises to the cytoplasm. The enzyme catalyses N-acetyl-L-glutamate 5-semialdehyde + phosphate + NADP(+) = N-acetyl-L-glutamyl 5-phosphate + NADPH + H(+). It functions in the pathway amino-acid biosynthesis; L-arginine biosynthesis; N(2)-acetyl-L-ornithine from L-glutamate: step 3/4. Functionally, catalyzes the NADPH-dependent reduction of N-acetyl-5-glutamyl phosphate to yield N-acetyl-L-glutamate 5-semialdehyde. This Rhizobium etli (strain CIAT 652) protein is N-acetyl-gamma-glutamyl-phosphate reductase.